The following is a 675-amino-acid chain: Heat shock 70 kDa protein 12A (675 aa).

Residues 1–45 (MADKEAGGGDAGPRETAPTSTYSSPARSLGDTGITPLSPSHILND) form a disordered region. Ala2 is subject to N-acetylalanine. A compositionally biased stretch (polar residues) spans 17 to 26 (APTSTYSSPA).

The protein belongs to the heat shock protein 70 family. As to quaternary structure, interacts with SORL1 (via cytosolic C-terminus); this interaction affects SORL1 internalization and subcellular localization. As to expression, expressed most strongly in brain, kidney and heart with little or no expression in other tissues. In the brain, expressed in glial cells, including astrocytes (at protein level). In the aorta, preferentially expressed in lesions.

The protein resides in the cytoplasm. The protein localises to the nucleus. Functionally, adapter protein for SORL1, but not SORT1. Delays SORL1 internalization and affects SORL1 subcellular localization. This is Heat shock 70 kDa protein 12A (Hspa12a) from Mus musculus (Mouse).